Consider the following 1221-residue polypeptide: A disintegrin and metalloproteinase with thrombospondin motifs 18 (1221 aa).

A signal peptide spans 1 to 47 (MECALLLACAFPAAGSGPPRGLAGLGRVAKALQLCCLCCASVAAALA). Residues 48–284 (SDSSSGASGL…EYGSSGRPRR (237 aa)) constitute a propeptide that is removed on maturation. Residues Asn-151 and Asn-190 are each glycosylated (N-linked (GlcNAc...) asparagine). A Cysteine switch motif is present at residues 252 to 259 (HFCGRRKK). Position 254 (Cys-254) interacts with Zn(2+). The tract at residues 258 to 291 (KKYAPKPPTEDTYLRFDEYGSSGRPRRSAGKSQK) is disordered. Positions 265–275 (PTEDTYLRFDE) are enriched in basic and acidic residues. Residues 293 to 498 (LNVETLVVAD…PQAGCLVDEP (206 aa)) enclose the Peptidase M12B domain. A glycan (N-linked (GlcNAc...) asparagine) is linked at Asn-313. 11 cysteine pairs are disulfide-bonded: Cys-369-Cys-420, Cys-395-Cys-402, Cys-414-Cys-493, Cys-453-Cys-477, Cys-521-Cys-546, Cys-532-Cys-553, Cys-541-Cys-572, Cys-566-Cys-577, Cys-601-Cys-638, Cys-605-Cys-643, and Cys-616-Cys-628. His-436 contributes to the Zn(2+) binding site. Residue Glu-437 is part of the active site. His-440 and His-446 together coordinate Zn(2+). In terms of domain architecture, Disintegrin spans 498 to 577 (PKQAGQYKYP…LSMWCRQGQC (80 aa)). Residues 589–644 (HGQWSAWSKWSECSRTCGGGVKFQERHCNNPKPQYGGLFCPGSSRIYQLCNINPCN) form the TSP type-1 1 domain. Residues Asn-745, Asn-838, and Asn-909 are each glycosylated (N-linked (GlcNAc...) asparagine). The interval 750 to 876 (FYKGLYLNQH…TPPATKRPAY (127 aa)) is spacer. 4 consecutive TSP type-1 domains span residues 931–990 (CPAY…NSHA), 991–1049 (CPPQ…GRCP), 1052–1116 (SRLQ…RACP), and 1123–1178 (MVAG…NFCP). The PLAC domain maps to 1184 to 1221 (EDPSCVDFFNWCHLVPQHGVCNHKFYGKQCCKSCTRKI).

The cofactor is Zn(2+). The precursor is cleaved by a furin endopeptidase. Post-translationally, glycosylated. Can be O-fucosylated by POFUT2 on a serine or a threonine residue found within the consensus sequence C1-X(2)-(S/T)-C2-G of the TSP type-1 repeat domains where C1 and C2 are the first and second cysteine residue of the repeat, respectively. Fucosylated repeats can then be further glycosylated by the addition of a beta-1,3-glucose residue by the glucosyltransferase, B3GALTL. Fucosylation mediates the efficient secretion of ADAMTS family members. Can also be C-glycosylated with one or two mannose molecules on tryptophan residues within the consensus sequence W-X-X-W of the TPRs, and N-glycosylated. These other glycosylations can also facilitate secretion. Expressed in fetal lung, liver, and kidney and in adult brain, prostate, submaxillary gland, and endothelium.

The protein resides in the secreted. It is found in the extracellular space. The protein localises to the extracellular matrix. This chain is A disintegrin and metalloproteinase with thrombospondin motifs 18 (ADAMTS18), found in Homo sapiens (Human).